Consider the following 411-residue polypeptide: Arginine deiminase (411 aa).

Cysteine 401 serves as the catalytic Amidino-cysteine intermediate.

Belongs to the arginine deiminase family.

The protein localises to the cytoplasm. It carries out the reaction L-arginine + H2O = L-citrulline + NH4(+). It functions in the pathway amino-acid degradation; L-arginine degradation via ADI pathway; carbamoyl phosphate from L-arginine: step 1/2. This Streptococcus equi subsp. equi (strain 4047) protein is Arginine deiminase.